Consider the following 225-residue polypeptide: Glutathione S-transferase A (225 aa).

In terms of domain architecture, GST N-terminal spans 3-85; sequence KDMTLLWGSG…YLESQFKSQG (83 aa). Arg-18 contributes to the glutathione binding site. In terms of domain architecture, GST C-terminal spans 92–217; that stretch reads CPAEQAMMYQ…WPPTWLESPQ (126 aa).

The protein belongs to the GST superfamily. Theta family. As to quaternary structure, homodimer. In terms of tissue distribution, found in all the tissues examined. Highest values found in liver and in intestinal mucosa.

Its subcellular location is the cytoplasm. The enzyme catalyses RX + glutathione = an S-substituted glutathione + a halide anion + H(+). Its function is as follows. Conjugation of reduced glutathione to a wide number of exogenous and endogenous hydrophobic electrophiles. This is Glutathione S-transferase A from Pleuronectes platessa (European plaice).